The sequence spans 197 residues: MTQPIQLIVGLGNPGPEYANTRHNAGAWYVASLAERYNGSLREDPKYFGLTGRIQINGQDVRLLIPTTFMNLSGKSVVALAKFFQIPPESILVAHDELDLPPGVAKFKQGGGHGGHNGLKDIINKLGNNNQFHRLRLGIGHPGTKEQVVGFVLTKAPKAEQQLIDDALDEAVRATDILFTNDMTKAMNRLHSFKATA.

Residue tyrosine 18 coordinates tRNA. Histidine 23 acts as the Proton acceptor in catalysis. TRNA is bound by residues phenylalanine 69, asparagine 71, and asparagine 117.

The protein belongs to the PTH family. In terms of assembly, monomer.

It is found in the cytoplasm. The enzyme catalyses an N-acyl-L-alpha-aminoacyl-tRNA + H2O = an N-acyl-L-amino acid + a tRNA + H(+). In terms of biological role, hydrolyzes ribosome-free peptidyl-tRNAs (with 1 or more amino acids incorporated), which drop off the ribosome during protein synthesis, or as a result of ribosome stalling. Functionally, catalyzes the release of premature peptidyl moieties from peptidyl-tRNA molecules trapped in stalled 50S ribosomal subunits, and thus maintains levels of free tRNAs and 50S ribosomes. This chain is Peptidyl-tRNA hydrolase, found in Tolumonas auensis (strain DSM 9187 / NBRC 110442 / TA 4).